A 688-amino-acid chain; its full sequence is Alpha-1,4-glucan:maltose-1-phosphate maltosyltransferase (688 aa).

Alpha-maltose 1-phosphate is bound by residues lysine 289, glutamine 349, and aspartate 384. The active-site Nucleophile is the aspartate 420. Asparagine 421 contributes to the alpha-maltose 1-phosphate binding site. The active-site Proton donor is glutamate 449. Position 560–561 (560–561) interacts with alpha-maltose 1-phosphate; that stretch reads KY.

This sequence belongs to the glycosyl hydrolase 13 family. GlgE subfamily. As to quaternary structure, homodimer.

It catalyses the reaction alpha-maltose 1-phosphate + [(1-&gt;4)-alpha-D-glucosyl](n) = [(1-&gt;4)-alpha-D-glucosyl](n+2) + phosphate. Maltosyltransferase that uses maltose 1-phosphate (M1P) as the sugar donor to elongate linear or branched alpha-(1-&gt;4)-glucans. Is involved in a branched alpha-glucan biosynthetic pathway from trehalose, together with TreS, Mak and GlgB. The polypeptide is Alpha-1,4-glucan:maltose-1-phosphate maltosyltransferase (Rhodospirillum rubrum (strain ATCC 11170 / ATH 1.1.1 / DSM 467 / LMG 4362 / NCIMB 8255 / S1)).